The chain runs to 232 residues: Ion-translocating oxidoreductase complex subunit E (232 aa).

6 helical membrane-spanning segments follow: residues glycine 18–alanine 38, isoleucine 39–valine 59, isoleucine 69–alanine 89, glycine 93–glycine 113, alanine 127–alanine 147, and asparagine 182–isoleucine 202.

The protein belongs to the NqrDE/RnfAE family. In terms of assembly, the complex is composed of six subunits: RnfA, RnfB, RnfC, RnfD, RnfE and RnfG.

Its subcellular location is the cell inner membrane. Functionally, part of a membrane-bound complex that couples electron transfer with translocation of ions across the membrane. The chain is Ion-translocating oxidoreductase complex subunit E from Shewanella loihica (strain ATCC BAA-1088 / PV-4).